Consider the following 323-residue polypeptide: Transcriptional regulator protein Pur-beta-A (323 aa).

Disordered regions lie at residues 1 to 34, 100 to 122, and 286 to 323; these read MADG…QELA, SPEQ…PRRA, and QERQ…VDDD. A2 carries the post-translational modification N-acetylalanine. The span at 9-19 shows a compositional bias: gly residues; the sequence is ERGGSSGGPGG. Residues 24–34 are compositionally biased toward basic and acidic residues; it reads MSREQETQELA. The interval 27 to 257 is DNA-binding; sequence EQETQELATK…LRVSEVKPSY (231 aa). A compositionally biased stretch (basic and acidic residues) spans 286-305; sequence QERQRDKMYERRGPGDRERS. Over residues 313–323 the composition is skewed to acidic residues; that stretch reads DDSETEDVDDD.

This sequence belongs to the PUR DNA-binding protein family.

It localises to the nucleus. Its function is as follows. Transcriptional regulator which can act as an activator or a repressor. The sequence is that of Transcriptional regulator protein Pur-beta-A (purb-a) from Xenopus laevis (African clawed frog).